The sequence spans 81 residues: U6-theraphotoxin-Hs1a (81 aa).

The signal sequence occupies residues 1-21 (MKASMFLALAGLVLLFVVCYA). A propeptide spanning residues 22–48 (SESEEKEFPRELLSTIFAVDDFKGEER) is cleaved from the precursor. 2 cysteine pairs are disulfide-bonded: Cys50–Cys65 and Cys57–Cys70.

It belongs to the neurotoxin 10 (Hwtx-1) family. 51 (Hntx-8) subfamily. Expressed by the venom gland.

It localises to the secreted. In terms of biological role, binds to the nicotinic acetylcholine receptor. Blocks neuromuscular transmission. The chain is U6-theraphotoxin-Hs1a from Cyriopagopus schmidti (Chinese bird spider).